Reading from the N-terminus, the 681-residue chain is Methionine--tRNA ligase (681 aa).

The 'HIGH' region motif lies at 27–37 (DYANGTPHIGH). Positions 316–320 (KMGKS) match the 'KMSKS' region motif. K319 is an ATP binding site. The segment at 522-571 (FPKPEPKADETKNAEAKPPKPQAKKEKKTVTDTAPAKTTEQKPEAAAPAQ) is disordered. The segment covering 525–539 (PEPKADETKNAEAKP) has biased composition (basic and acidic residues). The tRNA-binding domain maps to 580–681 (DFAKIDLRIA…LDLPSGTKVR (102 aa)).

This sequence belongs to the class-I aminoacyl-tRNA synthetase family. MetG type 2B subfamily. Homodimer.

It localises to the cytoplasm. It catalyses the reaction tRNA(Met) + L-methionine + ATP = L-methionyl-tRNA(Met) + AMP + diphosphate. Is required not only for elongation of protein synthesis but also for the initiation of all mRNA translation through initiator tRNA(fMet) aminoacylation. The sequence is that of Methionine--tRNA ligase (metG) from Deinococcus radiodurans (strain ATCC 13939 / DSM 20539 / JCM 16871 / CCUG 27074 / LMG 4051 / NBRC 15346 / NCIMB 9279 / VKM B-1422 / R1).